The primary structure comprises 31 residues: MFTLTSYFGFLLAALTITFVLFIGLNKIRLI.

Residues 4–24 (LTSYFGFLLAALTITFVLFIG) form a helical membrane-spanning segment.

The protein belongs to the PetL family. In terms of assembly, the 4 large subunits of the cytochrome b6-f complex are cytochrome b6, subunit IV (17 kDa polypeptide, PetD), cytochrome f and the Rieske protein, while the 4 small subunits are PetG, PetL, PetM and PetN. The complex functions as a dimer.

The protein localises to the plastid. It localises to the chloroplast thylakoid membrane. Functionally, component of the cytochrome b6-f complex, which mediates electron transfer between photosystem II (PSII) and photosystem I (PSI), cyclic electron flow around PSI, and state transitions. PetL is important for photoautotrophic growth as well as for electron transfer efficiency and stability of the cytochrome b6-f complex. The polypeptide is Cytochrome b6-f complex subunit 6 (Oxybasis rubra (Red goosefoot)).